Here is a 910-residue protein sequence, read N- to C-terminus: Valine--tRNA ligase (910 aa).

The short motif at 45-55 is the 'HIGH' region element; sequence PNVTGSLHMGH. Positions 554-558 match the 'KMSKS' region motif; that stretch reads KMSKS. An ATP-binding site is contributed by lysine 557. Residues 842 to 910 adopt a coiled-coil conformation; it reads DLQAEAARLA…TAESRIRDAS (69 aa).

The protein belongs to the class-I aminoacyl-tRNA synthetase family. ValS type 1 subfamily. As to quaternary structure, monomer.

It localises to the cytoplasm. It catalyses the reaction tRNA(Val) + L-valine + ATP = L-valyl-tRNA(Val) + AMP + diphosphate. Its function is as follows. Catalyzes the attachment of valine to tRNA(Val). As ValRS can inadvertently accommodate and process structurally similar amino acids such as threonine, to avoid such errors, it has a 'posttransfer' editing activity that hydrolyzes mischarged Thr-tRNA(Val) in a tRNA-dependent manner. The chain is Valine--tRNA ligase from Brucella melitensis biotype 1 (strain ATCC 23456 / CCUG 17765 / NCTC 10094 / 16M).